Here is a 223-residue protein sequence, read N- to C-terminus: Adenylate kinase (223 aa).

10-15 (GSGKGT) provides a ligand contact to ATP. The tract at residues 30 to 59 (ESGAIFREHIGGGTELGKKAKAYIDRGDLV) is NMP. AMP-binding positions include serine 31, arginine 36, 57–59 (DLV), 84–87 (GFPR), and glutamine 91. Residues 125 to 164 (GRRLCKNNNNHPNNIFIEAIKPNGDVCRVCGGTLSSRSDD) form an LID region. Residue arginine 126 coordinates ATP. AMP contacts are provided by arginine 161 and arginine 173. Residue glycine 209 coordinates ATP.

The protein belongs to the adenylate kinase family. As to quaternary structure, monomer.

It localises to the cytoplasm. The enzyme catalyses AMP + ATP = 2 ADP. Its pathway is purine metabolism; AMP biosynthesis via salvage pathway; AMP from ADP: step 1/1. In terms of biological role, catalyzes the reversible transfer of the terminal phosphate group between ATP and AMP. Plays an important role in cellular energy homeostasis and in adenine nucleotide metabolism. This Desulfovibrio desulfuricans (strain ATCC 27774 / DSM 6949 / MB) protein is Adenylate kinase.